Here is a 632-residue protein sequence, read N- to C-terminus: Cleavage stimulation factor subunit 2 tau variant (632 aa).

In terms of domain architecture, RRM spans 16–94 (RSVFVGNIPY…RALRVDNAAS (79 aa)). Disordered stretches follow at residues 201-296 (IPGK…PGGA) and 365-433 (YMGP…TRPM). Over residues 213–233 (PGGPGPSGPGGPGPGPAPGLC) the composition is skewed to pro residues. The span at 234-244 (PGPNVMLNQQN) shows a compositional bias: low complexity. Pro residues predominate over residues 275 to 287 (APGPIPAAVPGPG). Over residues 365–375 (YMGPPHQGPPM) the composition is skewed to low complexity. Composition is skewed to basic and acidic residues over residues 377–390 (HGHDNRGPASHDMR) and 420–433 (RGGRESRGMETRPM). Residues 428-432 (METRP) form a 1-1; approximate repeat. The segment at 428 to 466 (METRPMETEVLEPRGMERRMETCAMETRGMDARGLEMRG) is 8 X 5 AA tandem repeats of M-E-T-R-[AG]. Residues 433 to 437 (METEV) form a 1-2; approximate repeat. Residues 438–442 (LEPRG) form a 1-3; approximate repeat. A 1-4; approximate repeat occupies 443-446 (MERR). One copy of the 1-5; approximate repeat lies at 447-451 (METCA). One copy of the 1-6 repeat lies at 452 to 456 (METRG). A 1-7; approximate repeat occupies 457 to 461 (MDARG). The 1-8; approximate repeat unit spans residues 462 to 466 (LEMRG). The stretch at 508–512 (GGTMQ) is one 2-1; approximate repeat. Residues 508–565 (GGTMQGAGIQGGGMQGAGMQGGGMQGAGMQGGGMQGAGMQAGMQGASMQGGMQGAGMQ) form a 12 X 5 AA tandem repeats of G-[AT]-G-[MI]-Q region. A 2-2 repeat occupies 513-517 (GAGIQ). The 2-3; approximate repeat unit spans residues 518–522 (GGGMQ). Residues 519–543 (GGMQGAGMQGGGMQGAGMQGGGMQG) show a composition bias toward gly residues. The segment at 519 to 590 (GGMQGAGMQG…GQSQVTPQDQ (72 aa)) is disordered. One copy of the 2-4 repeat lies at 523 to 527 (GAGMQ). A 2-5; approximate repeat occupies 528-532 (GGGMQ). The 2-6 repeat unit spans residues 533–537 (GAGMQ). The 2-7; approximate repeat unit spans residues 538-542 (GGGMQ). A 2-8 repeat occupies 543–547 (GAGMQ). Residues 544-557 (AGMQAGMQGASMQG) show a composition bias toward low complexity. The stretch at 548–551 (AGMQ) is one 2-9; approximate repeat. The stretch at 552-556 (GASMQ) is one 2-10; approximate repeat. Residues 557 to 560 (GGMQ) form a 2-11; approximate repeat. The segment covering 558–574 (GMQGAGMQGASKQGGGQ) has biased composition (gly residues). Residues 561 to 565 (GAGMQ) form a 2-12 repeat. Low complexity predominate over residues 575–584 (PSSFSPGQSQ). Residue S579 is modified to Phosphoserine.

Expressed in testes, where it is restricted to pachytene spermatocytes and spermatids, and in the brain (at protein level).

The protein resides in the nucleus. Functionally, may play a significant role in AAUAAA-independent mRNA polyadenylation in germ cells. Directly involved in the binding to pre-mRNAs. This is Cleavage stimulation factor subunit 2 tau variant (Cstf2t) from Mus musculus (Mouse).